Here is a 104-residue protein sequence, read N- to C-terminus: Large ribosomal subunit protein uL24 (104 aa).

The protein belongs to the universal ribosomal protein uL24 family. Part of the 50S ribosomal subunit.

In terms of biological role, one of two assembly initiator proteins, it binds directly to the 5'-end of the 23S rRNA, where it nucleates assembly of the 50S subunit. One of the proteins that surrounds the polypeptide exit tunnel on the outside of the subunit. The polypeptide is Large ribosomal subunit protein uL24 (Chelativorans sp. (strain BNC1)).